Here is a 1359-residue protein sequence, read N- to C-terminus: Nuclear protein STH1/NPS1 (1359 aa).

At Ser-38 the chain carries Phosphoserine. Residues 307 to 383 (LERQQLLEKR…AKQRLAALKS (77 aa)) form the HSA domain. The 166-residue stretch at 482 to 647 (VSLYNNHLNG…WALLNFVLPK (166 aa)) folds into the Helicase ATP-binding domain. An ATP-binding site is contributed by 495–502 (DEMGLGKT). The short motif at 597–600 (DEGH) is the DEGH box element. One can recognise a Helicase C-terminal domain in the interval 795–956 (LLDRVLPKFK…NKSTAEEQEA (162 aa)). The tract at residues 1090–1246 (RERRRLRQNG…TAAKKTKTKS (157 aa)) is disordered. Polar residues predominate over residues 1108 to 1126 (LENTPEASETSLIENNSFT). Basic residues-rich tracts occupy residues 1143–1154 (RSKRRSSRKKRT) and 1198–1210 (KKKK…KIKL). The span at 1219–1232 (NDGKRAEEKPESKS) shows a compositional bias: basic and acidic residues. Over residues 1233–1246 (PAKKTAAKKTKTKS) the composition is skewed to basic residues. A Bromo domain is found at 1257 to 1357 (KLVEEMREQL…EFTDEWFKEH (101 aa)).

The protein belongs to the SNF2/RAD54 helicase family. In terms of assembly, interacts directly with SFH1, CSE4, histones H3, H4 and H2B, and via its N-terminus, with RSC8. Interacts with LDB7, NPL6 and RTT102. Component of the two forms of the RSC complex composed of at least either RSC1 or RSC2, and ARP7, ARP9, LDB7, NPL6, RSC3, RSC30, RSC4, RSC58, RSC6, RSC8, RSC9, SFH1, STH1, HTL1 and probably RTT102. The complexes interact with histone and histone variant components of centromeric chromatin.

The protein resides in the nucleus. It carries out the reaction ATP + H2O = ADP + phosphate + H(+). Its function is as follows. Catalytic component of the chromatin structure-remodeling complex (RSC), which is involved in transcription regulation and nucleosome positioning. RSC is responsible for the transfer of a histone octamer from a nucleosome core particle to naked DNA. The reaction requires ATP and involves an activated RSC-nucleosome intermediate. Remodeling reaction also involves DNA translocation, DNA twist and conformational change. As a reconfigurer of centromeric and flanking nucleosomes, RSC complex is required both for proper kinetochore function in chromosome segregation and, via a PKC1-dependent signaling pathway, for organization of the cellular cytoskeleton. This subunit is the essential ATPase of the complex. It is a DNA translocase capable of nucleosome remodeling. Required for full expression of early meiotic genes. Essential for mitotic growth and repression of CHA1 expression. Also involved in G2 phase control. The protein is Nuclear protein STH1/NPS1 (STH1) of Saccharomyces cerevisiae (strain ATCC 204508 / S288c) (Baker's yeast).